Reading from the N-terminus, the 228-residue chain is ATP-dependent dethiobiotin synthetase BioD (228 aa).

Residue 12 to 17 (DVGKTY) coordinates ATP. Mg(2+) is bound at residue Thr16. Residue Lys37 is part of the active site. Residues Asp53, 114–117 (EGMG), 174–175 (ND), 203–205 (PFI), and Asn210 each bind ATP. Positions 53 and 114 each coordinate Mg(2+).

Belongs to the dethiobiotin synthetase family. Homodimer. Requires Mg(2+) as cofactor.

Its subcellular location is the cytoplasm. It carries out the reaction (7R,8S)-7,8-diammoniononanoate + CO2 + ATP = (4R,5S)-dethiobiotin + ADP + phosphate + 3 H(+). It participates in cofactor biosynthesis; biotin biosynthesis; biotin from 7,8-diaminononanoate: step 1/2. Catalyzes a mechanistically unusual reaction, the ATP-dependent insertion of CO2 between the N7 and N8 nitrogen atoms of 7,8-diaminopelargonic acid (DAPA, also called 7,8-diammoniononanoate) to form a ureido ring. The chain is ATP-dependent dethiobiotin synthetase BioD from Nitrosopumilus maritimus (strain SCM1).